The following is a 301-amino-acid chain: MPRAHDDNWDLASSVGATATMVAAGRALATKDPRGLINDPFAEPLVRAVGLDFFTKLIDGELDIATTGNLSPGRAQAMIDGIAVRTKYFDDYFRTATDGGVRQVVILAAGLDARAYRLPWPAGTVVYEIDQPQVIDFKTTTLAGIGAKPTAIRRTVYIDLRADWPAALQAAGLDSTAPTAWLAEGMLIYLPPDPRTGCSTTAPNSVLRAARSLPNLSRALWISTQAGYEKWRIRFASTAWTSTWRRWCIPANAATSSTTCAPRAGTLRAQCGPTYSGAMVCPFPPHTTTIRSAKSSSSAVV.

S-adenosyl-L-methionine contacts are provided by residues D130 and D159–L160.

The protein belongs to the UPF0677 family.

Exhibits S-adenosyl-L-methionine-dependent methyltransferase activity. This is Putative S-adenosyl-L-methionine-dependent methyltransferase BCG_0775c from Mycobacterium bovis (strain BCG / Pasteur 1173P2).